We begin with the raw amino-acid sequence, 434 residues long: Trigger factor (434 aa).

Positions 160–245 (GDKAKINFVG…LNEVQAANLP (86 aa)) constitute a PPIase FKBP-type domain.

It belongs to the FKBP-type PPIase family. Tig subfamily.

It is found in the cytoplasm. It carries out the reaction [protein]-peptidylproline (omega=180) = [protein]-peptidylproline (omega=0). In terms of biological role, involved in protein export. Acts as a chaperone by maintaining the newly synthesized protein in an open conformation. Functions as a peptidyl-prolyl cis-trans isomerase. The protein is Trigger factor of Shewanella halifaxensis (strain HAW-EB4).